The chain runs to 306 residues: Porphobilinogen deaminase (306 aa).

Cysteine 244 carries the S-(dipyrrolylmethanemethyl)cysteine modification.

Belongs to the HMBS family. In terms of assembly, monomer. Dipyrromethane serves as cofactor.

It carries out the reaction 4 porphobilinogen + H2O = hydroxymethylbilane + 4 NH4(+). The protein operates within porphyrin-containing compound metabolism; protoporphyrin-IX biosynthesis; coproporphyrinogen-III from 5-aminolevulinate: step 2/4. In terms of biological role, tetrapolymerization of the monopyrrole PBG into the hydroxymethylbilane pre-uroporphyrinogen in several discrete steps. The protein is Porphobilinogen deaminase of Streptococcus sanguinis (strain SK36).